A 335-amino-acid polypeptide reads, in one-letter code: 4-hydroxy-3-methylbut-2-enyl diphosphate reductase (335 aa).

Cys14 is a [4Fe-4S] cluster binding site. Residues His43 and His81 each contribute to the (2E)-4-hydroxy-3-methylbut-2-enyl diphosphate site. Dimethylallyl diphosphate contacts are provided by His43 and His81. Isopentenyl diphosphate-binding residues include His43 and His81. Residue Cys103 coordinates [4Fe-4S] cluster. His132 contributes to the (2E)-4-hydroxy-3-methylbut-2-enyl diphosphate binding site. Residue His132 coordinates dimethylallyl diphosphate. His132 contacts isopentenyl diphosphate. Glu134 serves as the catalytic Proton donor. Residue Thr179 participates in (2E)-4-hydroxy-3-methylbut-2-enyl diphosphate binding. Cys209 contacts [4Fe-4S] cluster. Residues Ser237, Ser238, Asn239, and Ser285 each coordinate (2E)-4-hydroxy-3-methylbut-2-enyl diphosphate. Residues Ser237, Ser238, Asn239, and Ser285 each coordinate dimethylallyl diphosphate. Residues Ser237, Ser238, Asn239, and Ser285 each contribute to the isopentenyl diphosphate site.

This sequence belongs to the IspH family. It depends on [4Fe-4S] cluster as a cofactor.

It carries out the reaction isopentenyl diphosphate + 2 oxidized [2Fe-2S]-[ferredoxin] + H2O = (2E)-4-hydroxy-3-methylbut-2-enyl diphosphate + 2 reduced [2Fe-2S]-[ferredoxin] + 2 H(+). It catalyses the reaction dimethylallyl diphosphate + 2 oxidized [2Fe-2S]-[ferredoxin] + H2O = (2E)-4-hydroxy-3-methylbut-2-enyl diphosphate + 2 reduced [2Fe-2S]-[ferredoxin] + 2 H(+). It functions in the pathway isoprenoid biosynthesis; dimethylallyl diphosphate biosynthesis; dimethylallyl diphosphate from (2E)-4-hydroxy-3-methylbutenyl diphosphate: step 1/1. The protein operates within isoprenoid biosynthesis; isopentenyl diphosphate biosynthesis via DXP pathway; isopentenyl diphosphate from 1-deoxy-D-xylulose 5-phosphate: step 6/6. Its function is as follows. Catalyzes the conversion of 1-hydroxy-2-methyl-2-(E)-butenyl 4-diphosphate (HMBPP) into a mixture of isopentenyl diphosphate (IPP) and dimethylallyl diphosphate (DMAPP). Acts in the terminal step of the DOXP/MEP pathway for isoprenoid precursor biosynthesis. The polypeptide is 4-hydroxy-3-methylbut-2-enyl diphosphate reductase (Deinococcus radiodurans (strain ATCC 13939 / DSM 20539 / JCM 16871 / CCUG 27074 / LMG 4051 / NBRC 15346 / NCIMB 9279 / VKM B-1422 / R1)).